Here is a 252-residue protein sequence, read N- to C-terminus: MTEPILKVNDLSVYYGKKKALHSVSIDFYPNEITSLIGPSGSGKSTLLRAINRMGDLNPEVTVTGSIIYNGHNIYSRRTDTVELRKEIGMVFQQPNPFPMTIYENVVYGLRLKGVKDKKILDEAVEKSLVGASIWDEVKDRLHDSAIGLSGGQQQRVCIARVLATSPKIILLDEPTSALDPISAGKIEDTLYGLKEKYTMLVVTRSMQQASRISNRTGFFLAGDLVEYGNTKEMFMNPQKQETEDYITGKFG.

The ABC transporter domain occupies 6–247 (LKVNDLSVYY…PQKQETEDYI (242 aa)). 38–45 (GPSGSGKS) serves as a coordination point for ATP.

This sequence belongs to the ABC transporter superfamily. Phosphate importer (TC 3.A.1.7) family. As to quaternary structure, the complex is composed of two ATP-binding proteins (PstB), two transmembrane proteins (PstC and PstA) and a solute-binding protein (PstS).

Its subcellular location is the cell membrane. The catalysed reaction is phosphate(out) + ATP + H2O = ADP + 2 phosphate(in) + H(+). Its function is as follows. Part of the ABC transporter complex PstSACB involved in phosphate import. Responsible for energy coupling to the transport system. This chain is Phosphate import ATP-binding protein PstB 1, found in Streptococcus mutans serotype c (strain ATCC 700610 / UA159).